The following is a 165-amino-acid chain: Nucleotide-binding protein Tfu_2672 (165 aa).

The protein belongs to the YajQ family.

Functionally, nucleotide-binding protein. The sequence is that of Nucleotide-binding protein Tfu_2672 from Thermobifida fusca (strain YX).